Here is a 341-residue protein sequence, read N- to C-terminus: Ras association domain-containing protein 6 (341 aa).

At S155 the chain carries Phosphoserine. In terms of domain architecture, Ras-associating spans 190 to 278 (YDHETSIFTP…ARIFLMDKDA (89 aa)). The 48-residue stretch at 285-332 (VAPYINFHFSFLKSILQRLDEEEKMEIERIMAKFNTERAFILKCLQSK) folds into the SARAH domain.

In terms of assembly, interacts with MOAP1. Interaction with activated KRAS is still a matter of debate.

Its function is as follows. Involved in the induction of apoptosis. May act as a Ras effector protein. May suppress the serum-induced basal levels of NF-kappa-B. The protein is Ras association domain-containing protein 6 (Rassf6) of Rattus norvegicus (Rat).